The sequence spans 149 residues: Histone H2B.3, sperm (149 aa).

The segment at 1 to 57 (MPRSPAKTSPRKGSPRKGSPRKGSPSRKASPKRGGKGAKRAGKGGRRRRVVKRRRRR) is disordered. 6 consecutive short sequence motifs (SPKK motif) follow at residues 4 to 7 (SPAK), 9 to 12 (SPRK), 14 to 17 (SPRK), 19 to 22 (SPRK), 24 to 27 (SPSR), and 30 to 33 (SPKR). Residues 9 to 20 (SPRKGSPRKGSP) are compositionally biased toward basic residues. A phosphoserine mark is found at Ser19, Ser24, and Ser30. Residues 29 to 57 (ASPKRGGKGAKRAGKGGRRRRVVKRRRRR) are compositionally biased toward basic residues. O-linked (GlcNAc) serine glycosylation is present at Ser136. A Glycyl lysine isopeptide (Lys-Gly) (interchain with G-Cter in ubiquitin) cross-link involves residue Lys144.

It belongs to the histone H2B family. As to quaternary structure, the nucleosome is a histone octamer containing two molecules each of H2A, H2B, H3 and H4 assembled in one H3-H4 heterotetramer and two H2A-H2B heterodimers. The octamer wraps approximately 147 bp of DNA. In terms of processing, monoubiquitination of Lys-144 gives a specific tag for epigenetic transcriptional activation and is also prerequisite for histone H3 'Lys-4' and 'Lys-79' methylation. Phosphorylated on SPKK motifs 4, 5 and 6; which may regulate DNA binding. Dephosphorylated during maturation of spermatids to mature sperm and rephosphorylated at fertilization. Post-translationally, glcNAcylation at Ser-136 promotes monoubiquitination of Lys-144. It fluctuates in response to extracellular glucose, and associates with transcribed genes.

It is found in the nucleus. The protein resides in the chromosome. Its function is as follows. Core component of nucleosome. Nucleosomes wrap and compact DNA into chromatin, limiting DNA accessibility to the cellular machineries which require DNA as a template. Histones thereby play a central role in transcription regulation, DNA repair, DNA replication and chromosomal stability. DNA accessibility is regulated via a complex set of post-translational modifications of histones, also called histone code, and nucleosome remodeling. The polypeptide is Histone H2B.3, sperm (Parechinus angulosus (Angulate sea urchin)).